Here is a 592-residue protein sequence, read N- to C-terminus: uncharacterized protein (592 aa).

Positions 1–23 are cleaved as a signal peptide; it reads MRKAPLLRFTLASLALACSQAFA. S37 (nucleophile) is an active-site residue. Residues D294 and H297 contribute to the active site. Residues 334 to 592 enclose the Autotransporter domain; sequence HQDELRNQWQ…PDPGEPGGKP (259 aa). The tract at residues 572 to 592 is disordered; the sequence is FTLTGYTPHTAPDPGEPGGKP.

This sequence belongs to the 'GDSL' lipolytic enzyme family.

This is an uncharacterized protein from Pseudomonas putida (Arthrobacter siderocapsulatus).